Here is a 1297-residue protein sequence, read N- to C-terminus: Phosphoribosylformylglycinamidine synthase (1297 aa).

A disordered region spans residues 303 to 329; it reads ISPFPGAATGSGGEIRDEGATGRGAKP. 308–319 is an ATP binding site; it reads GAATGSGGEIRD. Mg(2+) contacts are provided by aspartate 680, glutamate 719, asparagine 723, and aspartate 887. ATP is bound at residue serine 889. Positions 1045 to 1297 constitute a Glutamine amidotransferase type-1 domain; the sequence is IAILREQGVN…RLFRNARMVF (253 aa). Catalysis depends on cysteine 1138, which acts as the Nucleophile. Active-site residues include histidine 1263 and glutamate 1265.

The protein in the N-terminal section; belongs to the FGAMS family. Monomer.

It is found in the cytoplasm. It carries out the reaction N(2)-formyl-N(1)-(5-phospho-beta-D-ribosyl)glycinamide + L-glutamine + ATP + H2O = 2-formamido-N(1)-(5-O-phospho-beta-D-ribosyl)acetamidine + L-glutamate + ADP + phosphate + H(+). It participates in purine metabolism; IMP biosynthesis via de novo pathway; 5-amino-1-(5-phospho-D-ribosyl)imidazole from N(2)-formyl-N(1)-(5-phospho-D-ribosyl)glycinamide: step 1/2. Functionally, phosphoribosylformylglycinamidine synthase involved in the purines biosynthetic pathway. Catalyzes the ATP-dependent conversion of formylglycinamide ribonucleotide (FGAR) and glutamine to yield formylglycinamidine ribonucleotide (FGAM) and glutamate. The sequence is that of Phosphoribosylformylglycinamidine synthase from Haemophilus influenzae (strain 86-028NP).